A 46-amino-acid polypeptide reads, in one-letter code: Succinate dehydrogenase subunit 8, mitochondrial (46 aa).

Component of complex II composed of eight subunits in plants: four classical SDH subunits SDH1, SDH2, SDH3 and SDH4 (a flavoprotein (FP), an iron-sulfur protein (IP), and a cytochrome b composed of a large and a small subunit.), as well as four subunits unknown in mitochondria from bacteria and heterotrophic eukaryotes.

Its subcellular location is the mitochondrion inner membrane. The protein operates within carbohydrate metabolism; tricarboxylic acid cycle. The polypeptide is Succinate dehydrogenase subunit 8, mitochondrial (Arabidopsis thaliana (Mouse-ear cress)).